The chain runs to 239 residues: Serine protease SplC (239 aa).

The first 36 residues, 1 to 36, serve as a signal peptide directing secretion; sequence MNKNIVIKSMAALAILTSVTGINAAVVEETQQIANA. Active-site charge relay system residues include H75, D113, and S193.

The protein belongs to the peptidase S1B family.

The protein localises to the secreted. This chain is Serine protease SplC (splC), found in Staphylococcus aureus (strain MW2).